Reading from the N-terminus, the 195-residue chain is Small ribosomal subunit protein uS4 (195 aa).

Residues 109–183 (RRLQTQVFKL…VKRKNLKKNQ (75 aa)) enclose the S4 RNA-binding domain. The segment at 165–195 (PFGGGRPGRVKRKNLKKNQGGGGGAAEEEED) is disordered.

It belongs to the universal ribosomal protein uS4 family. As to quaternary structure, component of the small ribosomal subunit. Identified in a IGF2BP1-dependent mRNP granule complex containing untranslated mRNAs. Part of the small subunit (SSU) processome, composed of more than 70 proteins and the RNA chaperone small nucleolar RNA (snoRNA) U3.

It is found in the cytoplasm. Its subcellular location is the nucleus. The protein localises to the nucleolus. Functionally, component of the small ribosomal subunit. The ribosome is a large ribonucleoprotein complex responsible for the synthesis of proteins in the cell. Part of the small subunit (SSU) processome, first precursor of the small eukaryotic ribosomal subunit. During the assembly of the SSU processome in the nucleolus, many ribosome biogenesis factors, an RNA chaperone and ribosomal proteins associate with the nascent pre-rRNA and work in concert to generate RNA folding, modifications, rearrangements and cleavage as well as targeted degradation of pre-ribosomal RNA by the RNA exosome. The chain is Small ribosomal subunit protein uS4 from Drosophila melanogaster (Fruit fly).